The chain runs to 191 residues: Acireductone dioxygenase 2 (191 aa).

The Fe(2+) site is built by histidine 102, histidine 104, glutamate 108, and histidine 146. Ni(2+) is bound by residues histidine 102, histidine 104, glutamate 108, and histidine 146.

This sequence belongs to the acireductone dioxygenase (ARD) family. Monomer. The cofactor is Fe(2+). It depends on Ni(2+) as a cofactor.

It catalyses the reaction 1,2-dihydroxy-5-(methylsulfanyl)pent-1-en-3-one + O2 = 3-(methylsulfanyl)propanoate + CO + formate + 2 H(+). The catalysed reaction is 1,2-dihydroxy-5-(methylsulfanyl)pent-1-en-3-one + O2 = 4-methylsulfanyl-2-oxobutanoate + formate + 2 H(+). It functions in the pathway amino-acid biosynthesis; L-methionine biosynthesis via salvage pathway; L-methionine from S-methyl-5-thio-alpha-D-ribose 1-phosphate: step 5/6. Functionally, catalyzes 2 different reactions between oxygen and the acireductone 1,2-dihydroxy-3-keto-5-methylthiopentene (DHK-MTPene) depending upon the metal bound in the active site. Fe-containing acireductone dioxygenase (Fe-ARD) produces formate and 2-keto-4-methylthiobutyrate (KMTB), the alpha-ketoacid precursor of methionine in the methionine recycle pathway. Ni-containing acireductone dioxygenase (Ni-ARD) produces methylthiopropionate, carbon monoxide and formate, and does not lie on the methionine recycle pathway. The chain is Acireductone dioxygenase 2 from Nocardia farcinica (strain IFM 10152).